An 80-amino-acid polypeptide reads, in one-letter code: Small ribosomal subunit protein bS18 (80 aa).

It belongs to the bacterial ribosomal protein bS18 family. In terms of assembly, part of the 30S ribosomal subunit. Forms a tight heterodimer with protein bS6.

In terms of biological role, binds as a heterodimer with protein bS6 to the central domain of the 16S rRNA, where it helps stabilize the platform of the 30S subunit. This is Small ribosomal subunit protein bS18 from Beijerinckia indica subsp. indica (strain ATCC 9039 / DSM 1715 / NCIMB 8712).